A 554-amino-acid polypeptide reads, in one-letter code: 3-(3-hydroxy-phenyl)propionate/3-hydroxycinnamic acid hydroxylase (554 aa).

FAD is bound by residues Q17–K46 and F285–D295.

Belongs to the PheA/TfdB FAD monooxygenase family. The cofactor is FAD.

It catalyses the reaction 3-(3-hydroxyphenyl)propanoate + NADH + O2 + H(+) = 3-(2,3-dihydroxyphenyl)propanoate + NAD(+) + H2O. The catalysed reaction is (2E)-3-(3-hydroxyphenyl)prop-2-enoate + NADH + O2 + H(+) = (2E)-3-(2,3-dihydroxyphenyl)prop-2-enoate + NAD(+) + H2O. It functions in the pathway aromatic compound metabolism; 3-phenylpropanoate degradation. In terms of biological role, catalyzes the insertion of one atom of molecular oxygen into position 2 of the phenyl ring of 3-(3-hydroxyphenyl)propionate (3-HPP) and hydroxycinnamic acid (3HCI). This Klebsiella pneumoniae (strain 342) protein is 3-(3-hydroxy-phenyl)propionate/3-hydroxycinnamic acid hydroxylase.